Reading from the N-terminus, the 355-residue chain is Probable butyrate kinase (355 aa).

Belongs to the acetokinase family.

Its subcellular location is the cytoplasm. The catalysed reaction is butanoate + ATP = butanoyl phosphate + ADP. This Listeria innocua serovar 6a (strain ATCC BAA-680 / CLIP 11262) protein is Probable butyrate kinase.